The chain runs to 352 residues: Protein RecA (352 aa).

68-75 serves as a coordination point for ATP; the sequence is GPESSGKT.

It belongs to the RecA family.

It is found in the cytoplasm. Can catalyze the hydrolysis of ATP in the presence of single-stranded DNA, the ATP-dependent uptake of single-stranded DNA by duplex DNA, and the ATP-dependent hybridization of homologous single-stranded DNAs. It interacts with LexA causing its activation and leading to its autocatalytic cleavage. This chain is Protein RecA, found in Clostridium perfringens (strain SM101 / Type A).